Reading from the N-terminus, the 351-residue chain is Nitronate monooxygenase (351 aa).

FMN contacts are provided by residues Leu-21, Asn-69, Gln-176, Gly-181, Gly-218, and Gln-237–Thr-240.

It belongs to the nitronate monooxygenase family. NMO class I subfamily. Requires FMN as cofactor.

It catalyses the reaction 3 propionate 3-nitronate + 3 O2 + H2O = 3 3-oxopropanoate + 2 nitrate + nitrite + H2O2 + 3 H(+). Its function is as follows. Nitronate monooxygenase that uses molecular oxygen to catalyze the oxidative denitrification of alkyl nitronates. The toxin propionate 3-nitronate (P3N) is the best substrate (and the presumed physiological substrate), but this enzyme is also active on other primary and secondary nitronates such as propyl-1-nitronate, ethylnitronate, pentyl-1-nitronate, butyl-1-nitronate and propyl-2-nitronate. Is likely involved in the degradation of P3N, that allows P.aeruginosa PAO1 to grow on 3-nitropropionate/P3N as the sole nitrogen source. Also functions in the detoxification of P3N, a metabolic poison produced by plants and fungi as a defense mechanism. Cannot oxidize nitroalkanes such as 3-nitropropionate, nitroethane, 1-nitropropane, 1-nitrobutane, 1-nitropentane, or 2-nitropropane. The sequence is that of Nitronate monooxygenase from Pseudomonas aeruginosa (strain ATCC 15692 / DSM 22644 / CIP 104116 / JCM 14847 / LMG 12228 / 1C / PRS 101 / PAO1).